Reading from the N-terminus, the 327-residue chain is MAMACLCLANISWATVCANSTGVAEDEHYDLSNIFNSTNNQPGQIVVLPEKSGWVGVSAICPPGTLVNYTYRSYVTNFIVQETIDNYKYMQLHDYLLGAMSLVDSVMDIQFPPQNYIRMGTDPNVSQNLPFGVMDSRLIFRLKVIRPFINMVEIPRQVMFTVYVTSTPYDPLVTPVYTISFGGRVEVPQNCELNAGQIVEFDFGDIGASLFSAAGPGNRPAGVMPQTKSIAVKCTNVAAQAYLTMRLEASAVSGQAMVSDNQDLGFIVADQNDTPITPNDLNSVIPFRLDAAAAANVTLRAWPISITGQKPTEGPFSALGYLRVDYQ.

Positions 1 to 24 are cleaved as a signal peptide; the sequence is MAMACLCLANISWATVCANSTGVA.

Belongs to the fimbrial protein family.

The protein resides in the fimbrium. Part of the sfmACDHF fimbrial operon. Could contribute to adhesion to various surfaces in specific environmental niches. Increases adhesion to eukaryotic T24 bladder epithelial cells in the absence of fim genes. This is an uncharacterized protein from Escherichia coli (strain K12).